The chain runs to 250 residues: Small ribosomal subunit protein uS3 (250 aa).

The 73-residue stretch at 39–111 (IRPLIKNHYP…KVQINIFEVK (73 aa)) folds into the KH type-2 domain.

This sequence belongs to the universal ribosomal protein uS3 family. In terms of assembly, part of the 30S ribosomal subunit. Forms a tight complex with proteins S10 and S14.

In terms of biological role, binds the lower part of the 30S subunit head. Binds mRNA in the 70S ribosome, positioning it for translation. The sequence is that of Small ribosomal subunit protein uS3 from Ziziphus jujuba witches'-broom phytoplasma.